The chain runs to 351 residues: Protein RecA (351 aa).

67–74 (GPESSGKT) contacts ATP.

It belongs to the RecA family.

It is found in the cytoplasm. Its function is as follows. Can catalyze the hydrolysis of ATP in the presence of single-stranded DNA, the ATP-dependent uptake of single-stranded DNA by duplex DNA, and the ATP-dependent hybridization of homologous single-stranded DNAs. It interacts with LexA causing its activation and leading to its autocatalytic cleavage. This chain is Protein RecA, found in Arthrobacter sp. (strain FB24).